A 933-amino-acid polypeptide reads, in one-letter code: Anoctamin-7 (933 aa).

The Cytoplasmic segment spans residues Met1–Gly355. A disordered region spans residues Glu43–Ala101. Residues Trp356 to Phe376 form a helical membrane-spanning segment. Residues Ser377–His420 lie on the Extracellular side of the membrane. Residues Gly421 to Trp441 form a helical membrane-spanning segment. At Lys442–Ala499 the chain is on the cytoplasmic side. Residues Gly500–Leu520 form a helical membrane-spanning segment. Residues Tyr521 to Ser550 lie on the Extracellular side of the membrane. Residues Val551–Leu571 form a helical membrane-spanning segment. Residues Thr572–Thr588 lie on the Cytoplasmic side of the membrane. A helical membrane pass occupies residues Leu589–Phe609. Residues Lys610–Gln714 are Extracellular-facing. A helical membrane pass occupies residues Phe715–Asn735. The Cytoplasmic portion of the chain corresponds to Asn736 to Gly763. The helical transmembrane segment at Ile764 to Leu784 threads the bilayer. Over Ala785–Tyr843 the chain is Extracellular. Residues Asn809 and Asn824 are each glycosylated (N-linked (GlcNAc...) asparagine). A helical transmembrane segment spans residues Trp844–Val864. Residues Gly865–Gln933 lie on the Cytoplasmic side of the membrane. A disordered region spans residues Gly902 to Gln933. The span at Glu915–Gln933 shows a compositional bias: polar residues.

The protein belongs to the anoctamin family. In terms of tissue distribution, specifically expressed in epithelial cells of the prostate (at protein level).

It localises to the cell membrane. The protein localises to the cell junction. The protein resides in the endoplasmic reticulum. Its subcellular location is the cytoplasm. It is found in the cytosol. It carries out the reaction a 1,2-diacyl-sn-glycero-3-phospho-L-serine(in) = a 1,2-diacyl-sn-glycero-3-phospho-L-serine(out). The catalysed reaction is a beta-D-galactosyl-(1&lt;-&gt;1')-N-acylsphing-4-enine(out) = a beta-D-galactosyl-(1&lt;-&gt;1')-N-acylsphing-4-enine(in). The enzyme catalyses a 1,2-diacyl-sn-glycero-3-phosphocholine(in) = a 1,2-diacyl-sn-glycero-3-phosphocholine(out). Its function is as follows. Has calcium-dependent phospholipid scramblase activity; scrambles phosphatidylserine, phosphatidylcholine and galactosylceramide. Does not exhibit calcium-activated chloride channel (CaCC) activity. May play a role in cell-cell interactions. The chain is Anoctamin-7 (ANO7) from Homo sapiens (Human).